Here is a 134-residue protein sequence, read N- to C-terminus: Profilin-3 (134 aa).

The cysteines at positions 13 and 118 are disulfide-linked. Positions 84 to 100 match the Involved in PIP2 interaction motif; it reads AVIRGKKGSGGITIKKT. Position 114 is a phosphothreonine (T114).

It belongs to the profilin family. In terms of assembly, occurs in many kinds of cells as a complex with monomeric actin in a 1:1 ratio. Phosphorylated by MAP kinases.

The protein resides in the cytoplasm. It is found in the cytoskeleton. Binds to actin and affects the structure of the cytoskeleton. At high concentrations, profilin prevents the polymerization of actin, whereas it enhances it at low concentrations. This is Profilin-3 from Olea europaea (Common olive).